The primary structure comprises 241 residues: DNA repair protein RecO (241 aa).

The protein belongs to the RecO family.

Functionally, involved in DNA repair and RecF pathway recombination. The sequence is that of DNA repair protein RecO from Orientia tsutsugamushi (strain Boryong) (Rickettsia tsutsugamushi).